Reading from the N-terminus, the 395-residue chain is Succinyl-diaminopimelate desuccinylase (395 aa).

Residue His-74 coordinates Zn(2+). Asp-76 is a catalytic residue. Asp-107 contributes to the Zn(2+) binding site. The Proton acceptor role is filled by Glu-141. Positions 142, 170, and 368 each coordinate Zn(2+).

It belongs to the peptidase M20A family. DapE subfamily. As to quaternary structure, homodimer. Zn(2+) is required as a cofactor. Requires Co(2+) as cofactor.

It carries out the reaction N-succinyl-(2S,6S)-2,6-diaminopimelate + H2O = (2S,6S)-2,6-diaminopimelate + succinate. It participates in amino-acid biosynthesis; L-lysine biosynthesis via DAP pathway; LL-2,6-diaminopimelate from (S)-tetrahydrodipicolinate (succinylase route): step 3/3. Its function is as follows. Catalyzes the hydrolysis of N-succinyl-L,L-diaminopimelic acid (SDAP), forming succinate and LL-2,6-diaminopimelate (DAP), an intermediate involved in the bacterial biosynthesis of lysine and meso-diaminopimelic acid, an essential component of bacterial cell walls. This Brucella anthropi (strain ATCC 49188 / DSM 6882 / CCUG 24695 / JCM 21032 / LMG 3331 / NBRC 15819 / NCTC 12168 / Alc 37) (Ochrobactrum anthropi) protein is Succinyl-diaminopimelate desuccinylase.